We begin with the raw amino-acid sequence, 358 residues long: Probable cinnamyl alcohol dehydrogenase (358 aa).

Cys-48 is a binding site for Zn(2+). Ser-50 serves as a coordination point for NADP(+). His-70, Glu-71, Cys-101, Cys-104, Cys-107, Cys-115, and Cys-164 together coordinate Zn(2+). NADP(+) contacts are provided by residues Thr-168, 189-194 (GLGGVG), 212-217 (SSSDKK), Thr-252, Gly-276, and 299-301 (SFV).

The protein belongs to the zinc-containing alcohol dehydrogenase family. As to quaternary structure, homodimer. It depends on Zn(2+) as a cofactor. In terms of tissue distribution, most actively expressed in stem, hypocotyl and root tissue.

It carries out the reaction (E)-cinnamyl alcohol + NADP(+) = (E)-cinnamaldehyde + NADPH + H(+). The catalysed reaction is (E)-coniferol + NADP(+) = (E)-coniferaldehyde + NADPH + H(+). It catalyses the reaction (E)-sinapyl alcohol + NADP(+) = (E)-sinapaldehyde + NADPH + H(+). The enzyme catalyses (E)-4-coumaroyl alcohol + NADP(+) = (E)-4-coumaraldehyde + NADPH + H(+). It carries out the reaction (E)-caffeyl alcohol + NADP(+) = (E)-caffeyl aldehyde + NADPH + H(+). It participates in aromatic compound metabolism; phenylpropanoid biosynthesis. Functionally, this protein catalyzes the final step in a branch of phenylpropanoid synthesis specific for production of lignin monomers. It acts on coniferyl-, sinapyl-, 4-coumaryl- and cinnamyl-alcohol. This is Probable cinnamyl alcohol dehydrogenase (CAD2) from Medicago sativa (Alfalfa).